The following is a 256-amino-acid chain: tRNA (guanine-N(7)-)-methyltransferase (256 aa).

A compositionally biased stretch (polar residues) spans 1–15; it reads MVATGGQAQDQSHNQ. The interval 1-22 is disordered; the sequence is MVATGGQAQDQSHNQEPGVLCP. Residues glycine 79, 102-103, 137-138, and leucine 157 each bind S-adenosyl-L-methionine; these read EI and NA. Aspartate 160 is a catalytic residue. S-adenosyl-L-methionine is bound at residue 235 to 237; sequence SEE.

This sequence belongs to the class I-like SAM-binding methyltransferase superfamily. TrmB family.

It is found in the nucleus. It carries out the reaction guanosine(46) in tRNA + S-adenosyl-L-methionine = N(7)-methylguanosine(46) in tRNA + S-adenosyl-L-homocysteine. Its pathway is tRNA modification; N(7)-methylguanine-tRNA biosynthesis. In terms of biological role, catalyzes the formation of N(7)-methylguanine at position 46 (m7G46) in tRNA. The protein is tRNA (guanine-N(7)-)-methyltransferase of Drosophila yakuba (Fruit fly).